The primary structure comprises 183 residues: Small ribosomal subunit protein uS4c (183 aa).

The region spanning 82–143 (MRLDNILFRL…KQRSKALIQN (62 aa)) is the S4 RNA-binding domain.

The protein belongs to the universal ribosomal protein uS4 family. As to quaternary structure, part of the 30S ribosomal subunit. Contacts protein S5. The interaction surface between S4 and S5 is involved in control of translational fidelity.

It localises to the plastid. The protein localises to the chloroplast. Its function is as follows. One of the primary rRNA binding proteins, it binds directly to 16S rRNA where it nucleates assembly of the body of the 30S subunit. With S5 and S12 plays an important role in translational accuracy. This is Small ribosomal subunit protein uS4c (rps4) from Gladiolus communis (Cornflag).